The sequence spans 334 residues: Ferrochelatase 1 (334 aa).

Residues H201 and E282 each contribute to the Fe cation site.

It belongs to the ferrochelatase family.

It is found in the cytoplasm. The enzyme catalyses heme b + 2 H(+) = protoporphyrin IX + Fe(2+). The protein operates within porphyrin-containing compound metabolism; protoheme biosynthesis; protoheme from protoporphyrin-IX: step 1/1. In terms of biological role, catalyzes the ferrous insertion into protoporphyrin IX. This is Ferrochelatase 1 from Shewanella oneidensis (strain ATCC 700550 / JCM 31522 / CIP 106686 / LMG 19005 / NCIMB 14063 / MR-1).